The chain runs to 218 residues: MDKSESTSAGRNHRRRPRRGSRSAPSSADANFRVLSQQLSRLNKTLAAGRPTINHPTFVGSERCRPGYTFTSITLKPPKIDRESYYGKRLLLPDSVTEYDKKLVSRIQIRVNPLPKFDSTVWVTVRKVPASSDLSVAAISAMFADGASPVLVYQYAASGVQANNKLLFDLSAMRADIGDMRKYAVLVYSKDDALETDELVLHVDIEHQRIPTSGVLPV.

The residue at position 1 (methionine 1) is an N-acetylmethionine; by host. The interval methionine 1 to aspartate 29 is disordered. The span at arginine 11–serine 21 shows a compositional bias: basic residues.

The protein belongs to the cucumovirus capsid protein family.

The protein resides in the virion. Capsid protein. Probably binds RNA and plays a role in packaging. This Cucumber mosaic virus (strain C) (CMV) protein is Capsid protein.